The following is a 256-amino-acid chain: DNA repair protein RecO (256 aa).

It belongs to the RecO family.

In terms of biological role, involved in DNA repair and RecF pathway recombination. In Streptococcus pneumoniae (strain Hungary19A-6), this protein is DNA repair protein RecO.